A 73-amino-acid polypeptide reads, in one-letter code: IGMVIECKDGYLMEPNGCKRGCLTRPARYCANECSRVKGTDGYCYAWLACYCYNMPNWVKTWDRATNTCGRGK.

The N-terminal stretch at 1 to 7 (IGMVIEC) is a signal peptide. Positions 8 to 70 (KDGYLMEPNG…TWDRATNTCG (63 aa)) constitute an LCN-type CS-alpha/beta domain. 4 cysteine pairs are disulfide-bonded: Cys18/Cys69, Cys22/Cys44, Cys30/Cys50, and Cys34/Cys52. At Arg71 the chain carries Arginine amide.

This sequence belongs to the long (4 C-C) scorpion toxin superfamily. Sodium channel inhibitor family. Beta subfamily. Expressed by the venom gland.

It is found in the secreted. Functionally, beta toxins bind voltage-independently at site-4 of sodium channels (Nav) and shift the voltage of activation toward more negative potentials thereby affecting sodium channel activation and promoting spontaneous and repetitive firing. In Tityus discrepans (Venezuelan scorpion), this protein is Toxin Td12.